Reading from the N-terminus, the 2594-residue chain is MQKRGREVSCLLISLTAICLVVTPGSRVCPRRCACYVPTEVHCTFRYLTSIPDGIPANVERVNLGYNSLTRLTENDFSGLSRLELLMLHSNGIHRVSDKTFSGLQSLQVLKMSYNKVQIIEKDTLYGLRSLTRLHLDHNNIEFINPEAFYGLTLLRLVHLEGNRLTKLHPDTFVSLSYLQIFKTSFIKYLYLSDNFLTSLPKEMVSSMPNLESLYLHGNPWTCDCHLKWLSEWMQGNPDIIKCKKERIPSSPQQCPLCMNPRISKGRSIAMVPSGSFLCTKPTIDPSLKSKSLGIQEDNGSASVSPQDFIEPFGSLSLNMTDLSGNKANVICSIQKPSRTLPIAFTEENDYIMLNMSFSTNLVCSVNYNHIQPVWQLLALYSDSPLILERKPQHTETPLLSPKYQQVALRPEDTFTNIEADFKADPFWFQQEKISLQLNRTATTLSTLQIQFSTDAQITLPKAEMRPVKRKWTMILMMNNTRLEHTVLVGGTIALDCPGKGDPSPHLEWVLADGSKVRAPYVSEDGRILIDKKGKLELQMADTFDAGLYHCISTNDADADILTYRITVVEPYVENKHENGALHTVIMGEILDLPCLSTGIPDASISWILPRNTVFSQSSRDMQILNNGTLRILQATPKDQGHYRCVAANPSGADFSSFQVSVQMKGQRTIEHDRDIDGSGLEEPKPSVLLKQPPSLKLPASSLTGTEAGKQVSGIHKKNKHRDLTHRRRGDSTLRRFREHRRQLPLSARRIDPQHWAALLEKAKKNSVLRKQENTTVKPTPLAIPLVELAGEEKDASGLTPPDEEFTVLKTKAFGVPERSPTADSRPVNHGFVTSSASGTEVSSTVNPQTLLPTHLPDFKLFNVVDSAAVSKSMNRPVTSKIEDTTHQNPIIIFPSVAEIQDSAQVGRTSSQSAHPATGGAMATYGYTTMLSSFTNKANTVLQSANPTESYGPQIPLTEVSRVSSNNSLAHTTKDPGFSKRPSDSHTTAPSLFQTPRNNSTGNVGRERTIWSRGRAISPYRTPVLRRHRHRIVRPALKGPANRNISQVSATEPPGMCRTCSSTERLTMATAALSVTGSSHTTLPKANNVGIISEESTTVVKKPSLLLKNKQDVDIETITTTINYFRSESTHMTPTEASMISAPTSISLGKTPIDTSGHLSMPRTIQAGTDLVVTPPLSSPLSQPSIPTKATSTKLSRRKIPWHPIFANNHNKEGMLKNLHQFGLQKNTATKPPEKAPLLPTDHGSSSPSTTLLASLTPAQSATMAATRRNGTEVQGARSLSAGKEQPFINSFLVLPSTTRKRSSTLSFLSVETPTVTTPPVIASAIISETQEVRSKKAKDQTKGSLKNRKGPTITPRQISGYSTYSVPTTTDTPLAFSHSPGKVTGRTVSTAAPHSAASLLGITELPQKCTHTSGNITASETTLLSKSQESTAMKRASATPPLLSSGAPRMPTPSPPPFTKVVVTDSEVPAVFKMMSNRMVTIYESSRHDIDLQQPSAEASPNPEILTGSTDFPLSSLLTSTPMPAPRVDKPQDSQWKPSPWPENKFQLRSYSETIEKGKRPEISLSPHLSFPEASTHALHWNAQRHAEKSVFDKKPAQNPTSKHLPYDSLPKTILKKPRIIGGKAASFTVPTNSDVLLPCEAVGDPKPTIHWTRVSSGREISRGIQKTRFHVLPNGTLSIQRVSIQDRGQYLCAASNPLGVDHLHVTLSVVSYPARILESHVKEITAHSGSTVKLKCRVEGMPRPTISWILANQTVVSETPEGSRKVWVTPDGTLIIHNLSLYDRGFYKCVANNPSGQDSLLVKIQVITAPPVIIEQKRQAIVGVLGESLKLPCTAKGTPQPSVHWVLYDGTELKPLQLTHSRFFLYPNGTLYIRNIVSSVRGTYECIATSSSGSERRVVILRVEEQETVPRIETASQKWTEVNLGEKLLLNCSATGDPKPTIIWKLPSKVVIDQWHRMGSRIHVYPNGSLVIGSVTEKDGGDYLCVARNKMGDDLVLMHVRLRLTPAKIEHKQHFKKQVLHGKDFQVDCKASGSPVPEVSWSLPDGTVVNNVAQADDSGYRTKRYTLFHNGTLYFNKVGMAEEGDYICSAQNTLGKDEMKVHLTVLTAIPRIRQNYRSNVRIKAGDTAVLDCEVTGEPKPNVFWLLPSNNVISFSNDRFIFHANGTLSINKVKPLDSGKYVCVAQNPSGDDTKTYKLDIVSRPPLINGLYANKTVIKATAIQHSKKHLDCRADGVPPPQITWIMPDNIFLTAPYYGGRITVHQNGTLEIRNIRLSDSADFTCVVRSEGGESVLVVQLKVLEMLRRPTFRNPFNEKVVAQVGKPVAMNCSVDGNPTPEIIWILPDGTQFANGPQNSPYLMASNGSLIVYKATRNKSGKYRCTARNKVGYIEKLILLEIGQKPVILTYEPGMIKSAGGESLSLHCVSDGIPKPNVKWTTPGGLVIDRPQVGGKYILHENGTLVIKETTAHDRGNYICKAQNSVGQAVISVPVTIVAYPPRIINYLPRSMLRRTGEAMQLHCVALGVPKPQITWETPGYSLLSTATERRPHRSEMLPLQGTLVIQNLRASDSGVYKCRAQNVLGADYATTYIQVL.

Positions 1-25 are cleaved as a signal peptide; the sequence is MQKRGREVSCLLISLTAICLVVTPG. The LRRNT domain occupies 29–56; that stretch reads CPRRCACYVPTEVHCTFRYLTSIPDGIP. LRR repeat units lie at residues 58-79, 82-103, 106-127, 130-151, 154-175, and 186-207; these read NVER…DFSG, RLEL…TFSG, SLQV…TLYG, SLTR…AFYG, LLRL…TFVS, and FIKY…MVSS. The LRRCT domain maps to 219-281; the sequence is NPWTCDCHLK…VPSGSFLCTK (63 aa). Asn-439 carries N-linked (GlcNAc...) asparagine glycosylation. 2 consecutive Ig-like C2-type domains span residues 461-567 and 571-661; these read PKAE…YRIT and PYVE…FQVS. Disulfide bonds link Cys-497–Cys-551 and Cys-595–Cys-645. Residue Asn-627 is glycosylated (N-linked (GlcNAc...) asparagine). Over residues 670–685 the composition is skewed to basic and acidic residues; sequence IEHDRDIDGSGLEEPK. Disordered stretches follow at residues 670–725 and 963–1008; these read IEHD…RDLT and VSSN…GRER. Basic residues predominate over residues 715 to 725; that stretch reads IHKKNKHRDLT. Residues 972–984 show a composition bias toward basic and acidic residues; that stretch reads TTKDPGFSKRPSD. Polar residues predominate over residues 985–1003; sequence SHTTAPSLFQTPRNNSTGN. N-linked (GlcNAc...) asparagine glycosylation is present at Asn-1044. Disordered regions lie at residues 1228 to 1251, 1333 to 1364, and 1428 to 1457; these read TATK…PSTT, VRSK…GYST, and SQES…PSPP. Positions 1333–1342 are enriched in basic and acidic residues; sequence VRSKKAKDQT. The span at 1355 to 1364 shows a compositional bias: polar residues; the sequence is TPRQISGYST. 10 consecutive Ig-like C2-type domains span residues 1619–1710, 1715–1807, 1812–1901, 1912–2005, 2008–2106, 2112–2200, 2205–2302, 2308–2398, 2403–2493, and 2499–2592; these read PRII…VTLS, PARI…VKIQ, PPVI…RRVV, PRIE…VRLR, PAKI…VHLT, PRIR…YKLD, PPLI…LKVL, PTFR…ILLE, PVIL…VPVT, and PRII…TYIQ. 3 disulfide bridges follow: Cys-1641/Cys-1694, Cys-1738/Cys-1791, and Cys-1835/Cys-1888. One copy of the LRR 11 repeat lies at 1658–1681; sequence SGREISRGIQKTRFHVLPNGTLSI. N-linked (GlcNAc...) asparagine glycosylation is found at Asn-1676, Asn-1780, Asn-1870, and Asn-1933. Disulfide bonds link Cys-1934/Cys-1987, Cys-2031/Cys-2090, Cys-2134/Cys-2184, Cys-2232/Cys-2284, Cys-2330/Cys-2382, Cys-2425/Cys-2477, and Cys-2521/Cys-2576. A glycan (N-linked (GlcNAc...) asparagine) is linked at Asn-2072. N-linked (GlcNAc...) asparagine glycosylation is present at Asn-2364. Tyr-2574 bears the Phosphotyrosine mark.

In terms of tissue distribution, in the embryo, expressed in the nasal mesenchyme.

The protein localises to the secreted. Functionally, involved in the control of early migration of neurons expressing gonadotropin-releasing hormone (GNRH neurons). May be involved in the maintenance of osteochondroprogenitor cells pool. This is Immunoglobulin superfamily member 10 (Igsf10) from Mus musculus (Mouse).